The primary structure comprises 409 residues: tRNA(Met) cytidine acetate ligase (409 aa).

ATP contacts are provided by residues 7–20, Gly102, Asn169, and Arg194; that span reads VVEYNPMHNGHLYH.

It belongs to the TmcAL family.

The protein resides in the cytoplasm. It carries out the reaction cytidine(34) in elongator tRNA(Met) + acetate + ATP = N(4)-acetylcytidine(34) in elongator tRNA(Met) + AMP + diphosphate. In terms of biological role, catalyzes the formation of N(4)-acetylcytidine (ac(4)C) at the wobble position of elongator tRNA(Met), using acetate and ATP as substrates. First activates an acetate ion to form acetyladenylate (Ac-AMP) and then transfers the acetyl group to tRNA to form ac(4)C34. This chain is tRNA(Met) cytidine acetate ligase, found in Clostridium botulinum (strain ATCC 19397 / Type A).